Here is a 413-residue protein sequence, read N- to C-terminus: Arginine biosynthesis bifunctional protein ArgJ (413 aa).

6 residues coordinate substrate: T163, K189, T200, E286, N408, and T413. The active-site Nucleophile is the T200.

It belongs to the ArgJ family. Heterotetramer of two alpha and two beta chains.

It is found in the cytoplasm. The enzyme catalyses N(2)-acetyl-L-ornithine + L-glutamate = N-acetyl-L-glutamate + L-ornithine. It carries out the reaction L-glutamate + acetyl-CoA = N-acetyl-L-glutamate + CoA + H(+). The protein operates within amino-acid biosynthesis; L-arginine biosynthesis; L-ornithine and N-acetyl-L-glutamate from L-glutamate and N(2)-acetyl-L-ornithine (cyclic): step 1/1. It functions in the pathway amino-acid biosynthesis; L-arginine biosynthesis; N(2)-acetyl-L-ornithine from L-glutamate: step 1/4. In terms of biological role, catalyzes two activities which are involved in the cyclic version of arginine biosynthesis: the synthesis of N-acetylglutamate from glutamate and acetyl-CoA as the acetyl donor, and of ornithine by transacetylation between N(2)-acetylornithine and glutamate. This chain is Arginine biosynthesis bifunctional protein ArgJ, found in Staphylococcus aureus (strain COL).